The following is a 289-amino-acid chain: Bifunctional aminodeoxychorismate lyase / D-amino acid transaminase (289 aa).

Residue R50 participates in pyridoxal 5'-phosphate binding. K149 carries the post-translational modification N6-(pyridoxal phosphate)lysine. 3 residues coordinate pyridoxal 5'-phosphate: Y153, T216, and T217. S252 is a 2-oxoglutarate binding site. S253 is a binding site for pyridoxal 5'-phosphate. 2-oxoglutarate is bound by residues M254 and T255.

The protein belongs to the class-IV pyridoxal-phosphate-dependent aminotransferase family. Homodimer. It depends on pyridoxal 5'-phosphate as a cofactor.

The catalysed reaction is 4-amino-4-deoxychorismate = 4-aminobenzoate + pyruvate + H(+). The enzyme catalyses D-alanine + 2-oxoglutarate = D-glutamate + pyruvate. It participates in cofactor biosynthesis; tetrahydrofolate biosynthesis; 4-aminobenzoate from chorismate: step 2/2. The protein operates within cell wall biogenesis; peptidoglycan biosynthesis. Its function is as follows. Bifunctional enzyme that catalyzes two enzymatic reactions in biochemically unrelated pathways: acts as an aminodeoxychorismate (ADC) lyase (ADCL) in folate biosynthesis, converting 4-amino-4-deoxychorismate (ADC) to 4-aminobenzoate (PABA), and as a D-amino acid transaminase (DAAT) in peptidoglycan (PG) biosynthesis. DAAT activity is strictly restricted to D-alanine and D-glutamate. May function as a metabolic toggle that alternates between ADCL and DAAT activity, prioritizing the former over the latter in response to substrate accumulation. Bifunctionality of this enzyme provides a failsafe mechanism for a metabolic coupling between nucleic acid and cell wall biosynthesis that appears to ensure prioritization of PABA production over D-alanine/D-glutamate biosynthesis. The protein is Bifunctional aminodeoxychorismate lyase / D-amino acid transaminase of Mycobacterium tuberculosis (strain ATCC 25618 / H37Rv).